The chain runs to 445 residues: ATP-dependent protease ATPase subunit HslU (445 aa).

Residues valine 18, 60 to 65, aspartate 254, glutamate 319, and arginine 391 each bind ATP; that span reads GVGKTE.

This sequence belongs to the ClpX chaperone family. HslU subfamily. In terms of assembly, a double ring-shaped homohexamer of HslV is capped on each side by a ring-shaped HslU homohexamer. The assembly of the HslU/HslV complex is dependent on binding of ATP.

It is found in the cytoplasm. Its function is as follows. ATPase subunit of a proteasome-like degradation complex; this subunit has chaperone activity. The binding of ATP and its subsequent hydrolysis by HslU are essential for unfolding of protein substrates subsequently hydrolyzed by HslV. HslU recognizes the N-terminal part of its protein substrates and unfolds these before they are guided to HslV for hydrolysis. This Alcanivorax borkumensis (strain ATCC 700651 / DSM 11573 / NCIMB 13689 / SK2) protein is ATP-dependent protease ATPase subunit HslU.